An 846-amino-acid polypeptide reads, in one-letter code: Interleukin cytokine receptor-related protein 1 (846 aa).

The signal sequence occupies residues M1–T25. Residues E26–T418 lie on the Extracellular side of the membrane. Residues N29, N79, N186, N214, N339, and N395 are each glycosylated (N-linked (GlcNAc...) asparagine). Residues E388 to K409 form a disordered region. The segment covering S400–K409 has biased composition (basic and acidic residues). A helical membrane pass occupies residues Y419 to L439. At K440 to H846 the chain is on the cytoplasmic side. The 143-residue stretch at S476 to T618 folds into the SEFIR domain. Positions G737–S771 are disordered. Positions T744–S771 are enriched in acidic residues.

Component of a heterodimeric receptor complex composed of ilcr-1 and ilcr-2. The receptor complex interacts with actl-1 and ilc-17.1 with the interaction being mediated by ilcr-2. In terms of tissue distribution, expressed in most neurons.

Its subcellular location is the cell membrane. Functionally, forms a receptor complex together with receptor ilcr-2, which upon activation acts as a modulator of neuronal activity. Binding of the ligand ilc-17.1 to the ilcr-1/2 receptor complex triggers a signaling cascade that activates the downstream signaling components actl-1, pik-1 and nfki-1, and results in increased neuronal activity in RMG interneurons in response to input from oxygen-sensing neurons. This leads to increased animal movement and promotes aggregation behavior. In Caenorhabditis elegans, this protein is Interleukin cytokine receptor-related protein 1.